The primary structure comprises 342 residues: L-threonine 3-dehydrogenase (342 aa).

Residue Cys38 coordinates Zn(2+). Catalysis depends on charge relay system residues Thr40 and His43. Residues His63, Glu64, Cys93, Cys96, Cys99, and Cys107 each coordinate Zn(2+). Residues Ile175, Asp195, Arg200, 262–264 (LGI), and 286–287 (IY) each bind NAD(+).

Belongs to the zinc-containing alcohol dehydrogenase family. As to quaternary structure, homotetramer. Zn(2+) serves as cofactor.

The protein localises to the cytoplasm. The enzyme catalyses L-threonine + NAD(+) = (2S)-2-amino-3-oxobutanoate + NADH + H(+). The protein operates within amino-acid degradation; L-threonine degradation via oxydo-reductase pathway; glycine from L-threonine: step 1/2. Catalyzes the NAD(+)-dependent oxidation of L-threonine to 2-amino-3-ketobutyrate. The sequence is that of L-threonine 3-dehydrogenase from Burkholderia cenocepacia (strain ATCC BAA-245 / DSM 16553 / LMG 16656 / NCTC 13227 / J2315 / CF5610) (Burkholderia cepacia (strain J2315)).